Reading from the N-terminus, the 271-residue chain is Shikimate dehydrogenase (NADP(+)) (271 aa).

Residues 14 to 16 (SLS) and threonine 61 contribute to the shikimate site. The Proton acceptor role is filled by lysine 65. The shikimate site is built by asparagine 86 and aspartate 101. Residues 125–129 (GAGGA) and isoleucine 212 contribute to the NADP(+) site. Tyrosine 214 is a shikimate binding site. Glycine 235 contributes to the NADP(+) binding site.

This sequence belongs to the shikimate dehydrogenase family. Homodimer.

The enzyme catalyses shikimate + NADP(+) = 3-dehydroshikimate + NADPH + H(+). The protein operates within metabolic intermediate biosynthesis; chorismate biosynthesis; chorismate from D-erythrose 4-phosphate and phosphoenolpyruvate: step 4/7. Its function is as follows. Involved in the biosynthesis of the chorismate, which leads to the biosynthesis of aromatic amino acids. Catalyzes the reversible NADPH linked reduction of 3-dehydroshikimate (DHSA) to yield shikimate (SA). This is Shikimate dehydrogenase (NADP(+)) from Clostridium perfringens (strain SM101 / Type A).